The primary structure comprises 395 residues: E3 ubiquitin-protein ligase NHLRC1 (395 aa).

The RING-type zinc finger occupies 26–72 (CKVCFEKFGHRQQRRPRNLSCGHVVCLACVAALAHPRTLALECPFCR). 6 NHL repeats span residues 113-157 (ALTC…FDSG), 161-204 (AHQF…FDFF), 205-245 (GQIK…LDVD), 248-300 (EGVL…FSSS), 301-349 (MQLV…LGKP), and 350-393 (EEFP…YKVD).

In terms of assembly, interacts with AGL. Interacts (via the NHL repeats) with EPM2A/laforin. Forms a complex with EPM2A/laforin and HSP70. Interacts with PRDM8. In terms of tissue distribution, expressed in brain, cerebellum, spinal cord, medulla, heart, liver, skeletal muscle and pancreas.

The protein localises to the endoplasmic reticulum. It is found in the nucleus. It catalyses the reaction S-ubiquitinyl-[E2 ubiquitin-conjugating enzyme]-L-cysteine + [acceptor protein]-L-lysine = [E2 ubiquitin-conjugating enzyme]-L-cysteine + N(6)-ubiquitinyl-[acceptor protein]-L-lysine.. It functions in the pathway protein modification; protein ubiquitination. E3 ubiquitin-protein ligase. Together with the phosphatase EPM2A/laforin, appears to be involved in the clearance of toxic polyglucosan and protein aggregates via multiple pathways. In complex with EPM2A/laforin and HSP70, suppresses the cellular toxicity of misfolded proteins by promoting their degradation through the ubiquitin-proteasome system (UPS). Ubiquitinates the glycogen-targeting protein phosphatase subunits PPP1R3C/PTG and PPP1R3D in a laforin-dependent manner and targets them for proteasome-dependent degradation, thus decreasing glycogen accumulation. Polyubiquitinates EPM2A/laforin and ubiquitinates AGL and targets them for proteasome-dependent degradation. Also promotes proteasome-independent protein degradation through the macroautophagy pathway. This chain is E3 ubiquitin-protein ligase NHLRC1 (NHLRC1), found in Homo sapiens (Human).